We begin with the raw amino-acid sequence, 944 residues long: Probable UDP-N-acetylglucosamine--peptide N-acetylglucosaminyltransferase SPINDLY (944 aa).

TPR repeat units lie at residues 34 to 67 (GTDA…DGAN), 68 to 101 (VEAL…DPKN), 102 to 135 (ACAL…DPSY), 143 to 176 (AIVL…DSHY), 177 to 210 (APAY…RPLY), 211 to 244 (AEAY…SPNF), 252 to 285 (AIAL…NWHY), 286 to 319 (ADAM…NPRC), 320 to 353 (AEAC…KPNF), 355 to 387 (QSLN…NPTY), and 388 to 421 (AEAY…DPDS). Residues 422–944 (RNAGQNRLLA…RCEANGHSSR (523 aa)) are catalytic region. The disordered stretch occupies residues 873–944 (NATAEEDNQS…RCEANGHSSR (72 aa)). Residues 897–911 (PQPQIMVNGVTSPEG) show a composition bias toward polar residues.

This sequence belongs to the glycosyltransferase 41 family. O-GlcNAc transferase subfamily. In terms of tissue distribution, expressed in all parts of plants, including immature leaf blade, leaf sheath, mature leaf blade, roots, germinating embryos and aleurone layers.

The protein localises to the nucleus. The catalysed reaction is L-seryl-[protein] + UDP-N-acetyl-alpha-D-glucosamine = 3-O-(N-acetyl-beta-D-glucosaminyl)-L-seryl-[protein] + UDP + H(+). The enzyme catalyses L-threonyl-[protein] + UDP-N-acetyl-alpha-D-glucosamine = 3-O-(N-acetyl-beta-D-glucosaminyl)-L-threonyl-[protein] + UDP + H(+). It functions in the pathway protein modification; protein glycosylation. In terms of biological role, probable O-linked N-acetylglucosamine transferase (OGT) involved in various processes such as gibberellin (GA) signaling pathway. OGTs catalyze the addition of nucleotide-activated sugars directly onto the polypeptide through O-glycosidic linkage with the hydroxyl of serine or threonine. Probably acts by adding O-linked sugars to yet unknown proteins. This is Probable UDP-N-acetylglucosamine--peptide N-acetylglucosaminyltransferase SPINDLY (SPY) from Hordeum vulgare (Barley).